Reading from the N-terminus, the 146-residue chain is MKLHELKPAEGSRQVRNRVGRGTSSGNGKTAGRGQKGQKARSGGGVRLGFEGGQTPLFRRLPKRGFTNINRKDYAVVNLDTLNRFEDGTEVTPVVLKEAGIVKNEKAGIKVLADGELTKKLTVKAAKFSKSAQEAIEAAGGSIEVI.

Basic and acidic residues predominate over residues 1–10 (MKLHELKPAE). The interval 1–51 (MKLHELKPAEGSRQVRNRVGRGTSSGNGKTAGRGQKGQKARSGGGVRLGFE) is disordered. 2 stretches are compositionally biased toward gly residues: residues 23–35 (TSSG…GRGQ) and 42–51 (SGGGVRLGFE).

The protein belongs to the universal ribosomal protein uL15 family. As to quaternary structure, part of the 50S ribosomal subunit.

Functionally, binds to the 23S rRNA. This Enterococcus faecalis (strain ATCC 700802 / V583) protein is Large ribosomal subunit protein uL15.